A 1185-amino-acid polypeptide reads, in one-letter code: Chromosome partition protein Smc (1185 aa).

An ATP-binding site is contributed by 32-39 (PNGSGKSN). A coiled-coil region spans residues 228–503 (SRLVKKLTIA…LQAVQERYTN (276 aa)). Residues 300–323 (TQGQQGVDAERRQNQQSEQERLTA) are disordered. The span at 307-320 (DAERRQNQQSEQER) shows a compositional bias: basic and acidic residues. An SMC hinge domain is found at 519 to 637 (SGVAGAVSEL…VDTLDHAMAI (119 aa)). 2 coiled-coil regions span residues 675 to 928 (QQQQ…RRLE) and 989 to 1025 (AIDEFERVKERFDFLNNQASDLTEAKEHLLQTMADLD).

This sequence belongs to the SMC family. As to quaternary structure, homodimer.

The protein resides in the cytoplasm. Required for chromosome condensation and partitioning. The chain is Chromosome partition protein Smc from Lactiplantibacillus plantarum (strain ATCC BAA-793 / NCIMB 8826 / WCFS1) (Lactobacillus plantarum).